Consider the following 206-residue polypeptide: Recombination protein RecR (206 aa).

A C4-type zinc finger spans residues Cys-58–Cys-73. The region spanning Gln-81–Ser-176 is the Toprim domain.

Belongs to the RecR family.

In terms of biological role, may play a role in DNA repair. It seems to be involved in an RecBC-independent recombinational process of DNA repair. It may act with RecF and RecO. The chain is Recombination protein RecR from Flavobacterium johnsoniae (strain ATCC 17061 / DSM 2064 / JCM 8514 / BCRC 14874 / CCUG 350202 / NBRC 14942 / NCIMB 11054 / UW101) (Cytophaga johnsonae).